Consider the following 323-residue polypeptide: Thiamine-monophosphate kinase (323 aa).

Residues Asp-30, Ser-45, Thr-46, and Asp-47 each coordinate Mg(2+). His-54 is a binding site for substrate. Positions 75 and 122 each coordinate Mg(2+). ATP contacts are provided by residues Gly-121–Asp-122 and Arg-146. Position 212 (Asp-212) interacts with Mg(2+). Ser-214 provides a ligand contact to ATP. Asp-215 contacts Mg(2+). Residues Glu-263 and Phe-319 each contribute to the substrate site.

Belongs to the thiamine-monophosphate kinase family.

It carries out the reaction thiamine phosphate + ATP = thiamine diphosphate + ADP. Its pathway is cofactor biosynthesis; thiamine diphosphate biosynthesis; thiamine diphosphate from thiamine phosphate: step 1/1. Functionally, catalyzes the ATP-dependent phosphorylation of thiamine-monophosphate (TMP) to form thiamine-pyrophosphate (TPP), the active form of vitamin B1. The polypeptide is Thiamine-monophosphate kinase (Buchnera aphidicola subsp. Schizaphis graminum (strain Sg)).